A 465-amino-acid chain; its full sequence is Probable tRNA modification GTPase MnmE (465 aa).

The (6S)-5-formyl-5,6,7,8-tetrahydrofolate site is built by arginine 23, glutamate 85, and arginine 124. A TrmE-type G domain is found at glycine 221–serine 384. GTP contacts are provided by residues asparagine 231 to serine 236, threonine 250 to threonine 256, and aspartate 275 to glycine 278. Positions 235 and 256 each coordinate Mg(2+). Lysine 465 contacts (6S)-5-formyl-5,6,7,8-tetrahydrofolate.

Belongs to the TRAFAC class TrmE-Era-EngA-EngB-Septin-like GTPase superfamily. TrmE GTPase family. K(+) is required as a cofactor.

Its subcellular location is the plastid. It is found in the chloroplast. Its function is as follows. Exhibits a very high intrinsic GTPase hydrolysis rate. Involved in the addition of a carboxymethylaminomethyl (cmnm) group at the wobble position (U34) of certain tRNAs, forming tRNA-cmnm(5)s(2)U34. The sequence is that of Probable tRNA modification GTPase MnmE from Cyanidium caldarium (Red alga).